Reading from the N-terminus, the 331-residue chain is UDP-GalNAc:beta-1,3-N-acetylgalactosaminyltransferase 1 (331 aa).

Residues 1 to 20 (MASALWTVLPSRMSLRSLQW) lie on the Cytoplasmic side of the membrane. Residues 21–43 (SLLLLSLLSFLVMWYLSLPHYNV) form a helical; Signal-anchor for type II membrane protein membrane-spanning segment. Residues 44–331 (IERVNWMYFY…VMLRNTTCHY (288 aa)) are Lumenal-facing. Asn72, Asn154, Asn198, Asn212, and Asn326 each carry an N-linked (GlcNAc...) asparagine glycan.

Belongs to the glycosyltransferase 31 family. Requires Mg(2+) as cofactor.

The protein resides in the golgi apparatus membrane. The catalysed reaction is a globoside Gb3Cer (d18:1(4E)) + UDP-N-acetyl-alpha-D-galactosamine = a globoside Gb4Cer (d18:1(4E)) + UDP + H(+). It functions in the pathway protein modification; protein glycosylation. Its function is as follows. Transfers N-acetylgalactosamine onto globotriaosylceramide. Plays a critical role in preimplantation stage embryonic development. In Pongo abelii (Sumatran orangutan), this protein is UDP-GalNAc:beta-1,3-N-acetylgalactosaminyltransferase 1 (B3GALNT1).